The chain runs to 197 residues: Negative modulator of initiation of replication (197 aa).

3 interaction with DNA regions span residues 100–101 (AV), 129–133 (RTRVY), and 163–169 (NTNSGRK).

The protein belongs to the SeqA family. In terms of assembly, homodimer. Polymerizes to form helical filaments.

The protein localises to the cytoplasm. Its function is as follows. Negative regulator of replication initiation, which contributes to regulation of DNA replication and ensures that replication initiation occurs exactly once per chromosome per cell cycle. Binds to pairs of hemimethylated GATC sequences in the oriC region, thus preventing assembly of replication proteins and re-initiation at newly replicated origins. Repression is relieved when the region becomes fully methylated. The polypeptide is Negative modulator of initiation of replication (Haemophilus influenzae (strain ATCC 51907 / DSM 11121 / KW20 / Rd)).